The following is a 1305-amino-acid chain: MSLLQSALDFLAGPGSLGGAAGRDQSDFVGQTVELGELRLRVRRVLAEGGFAFVYEAQDLGSGREYALKRLLSNEEEKNRAIIQEVCFLKKLSGHPNIVQFCSAASIGKEESDTGQAEFLLLTELCKGQLVEFLRRVECKGPLSCDSILKIFYQTCRAVQHMHRQKPPIIHRDLKVENLLLSNQGTIKLCDFGSATTISHYPDYSWSAQKRAMVEEEITRNTTPMYRTPEIVDLYSNFPIGEKQDIWALGCILYLLCFRQHPFEDGAKLRIVNGKYSIPVNDTRYTVFHDLIRGMLKVNPEERLSIAEVVRQLQEIAAARNVNPKAPITELLEQNGGYGNSGPSRAQPPSGGPVNSSGVLALAEYDQPYGGFLDILRGGTERLFTNLKDTSSKVIQSVANYAKGDLDISYITSRIAVMSFPAEGVESAIKNNIEDVRLFLDAKHPGHYAVYNLSPRIYRASKFHNRVTECGWAVRRAPHLHSLYTLCRSMHAWLREDHRNVCVVHCMDGRAASAVAVCAFLCFCRLFSTAEAAVYMFSMKRCPPGIWPSHKRYIEYVCDMVAEEPITPHSKPMLVKSVVMTPVPLFSKQRNGCRPFCEVYVGEERVTTTSQEYDRMKEFKIEDGKAVIPLGITVQGDVLTIIYHARSTLGGRLQAKMASMKMFQIQFHTGFVPRNATTVKFAKYDLDACDIQEKYPDLFQVNLEVEVEPRDRPSRDVPPWENTSLRGLNPKILFSNREEQQDILSKFGKPELPRQPGSTAQYDAEAGSPEAEITESDSPQSSSTDTNHFLHTLDWQEEKDPETGVDNTSPKESQSNLIADGDGSEVSDEEEASCPSEERKPGAGEDTPRLAAGTRQQDLIFDVGMLAAPQEPVQPEEGVDLLGLHSEGDLRPAAPLQASGVQSSNTDLLSSLLEPSDASQVGPPGDLLGGETPLLLASPVSLLGVQSNLQGKVPDTVDPFDQFLLPSSSDTQPCSKPDLFGEFLNSDSVASSTAFPSTHSAPPPSCSTAFLHLGDLPAEPNKVIASSSHPDLLGGWDTWAETALPGPASMPVPEGTLFSSAGHPAPPGPNPSQTKSQNPDPFADLSDLSSSLQGLPAGLPAGSFVGTSATTHKSNSSWQTTRPTAPGTSWPPQAKPAPRASEQLRSHFSVIGAREERGVRAPSFAQKPKVSENDFEDLLPNQGFSKSDKKGPKTMAEMRKQELARDTDPFKLKLLDWIEGKERNIRALLSTLHTVLWDGESRWTPVSMADLVTPEQVKKQYRRAVLVVHPDKATGQPYEQSAKMIFMELNDAWSEFENQGSRPLF.

Ser2 carries the N-acetylserine modification. Residues Ser2 and Ser16 each carry the phosphoserine modification. In terms of domain architecture, Protein kinase spans 40-315; sequence LRVRRVLAEG…IAEVVRQLQE (276 aa). Asp173 serves as the catalytic Proton acceptor. The interval 332 to 354 is disordered; that stretch reads LEQNGGYGNSGPSRAQPPSGGPV. In terms of domain architecture, Phosphatase tensin-type spans 397 to 564; it reads SVANYAKGDL…EYVCDMVAEE (168 aa). A Phosphoserine modification is found at Ser454. Positions 570-708 constitute a C2 tensin-type domain; the sequence is SKPMLVKSVV…FQVNLEVEVE (139 aa). The disordered stretch occupies residues 747–856; sequence FGKPELPRQP…TPRLAAGTRQ (110 aa). At Ser768 the chain carries Phosphoserine. Thr774 carries the phosphothreonine modification. Positions 776 to 789 are enriched in polar residues; the sequence is SDSPQSSSTDTNHF. Phosphoserine is present on Ser781. Thr792 bears the Phosphothreonine mark. Polar residues predominate over residues 805–817; that stretch reads VDNTSPKESQSNL. Residues Ser809, Ser824, and Ser827 each carry the phosphoserine modification. The span at 822–832 shows a compositional bias: acidic residues; that stretch reads DGSEVSDEEEA. Residues 836–848 show a composition bias toward basic and acidic residues; it reads SEERKPGAGEDTP. The residue at position 938 (Ser938) is a Phosphoserine. A disordered region spans residues 1044-1141; sequence LPGPASMPVP…PQAKPAPRAS (98 aa). Over residues 1105-1131 the composition is skewed to polar residues; sequence VGTSATTHKSNSSWQTTRPTAPGTSWP. Arg1122 is modified (omega-N-methylarginine). Position 1171 is a phosphoserine (Ser1171). The 65-residue stretch at 1241–1305 folds into the J domain; sequence SRWTPVSMAD…FENQGSRPLF (65 aa).

Belongs to the protein kinase superfamily. Ser/Thr protein kinase family.

It localises to the cytoplasm. Its subcellular location is the perinuclear region. The protein resides in the golgi apparatus. The protein localises to the trans-Golgi network. It is found in the cell junction. It localises to the focal adhesion. Its subcellular location is the cytoplasmic vesicle. The protein resides in the clathrin-coated vesicle. It carries out the reaction L-seryl-[protein] + ATP = O-phospho-L-seryl-[protein] + ADP + H(+). It catalyses the reaction L-threonyl-[protein] + ATP = O-phospho-L-threonyl-[protein] + ADP + H(+). Functionally, associates with cyclin G and CDK5. Seems to act as an auxilin homolog that is involved in the uncoating of clathrin-coated vesicles by Hsc70 in non-neuronal cells. Expression oscillates slightly during the cell cycle, peaking at G1. May play a role in clathrin-mediated endocytosis and intracellular trafficking, and in the dynamics of clathrin assembly/disassembly. This chain is Cyclin-G-associated kinase, found in Rattus norvegicus (Rat).